The following is a 49-amino-acid chain: Large ribosomal subunit protein bL33B (49 aa).

The protein belongs to the bacterial ribosomal protein bL33 family.

In Acholeplasma laidlawii (strain PG-8A), this protein is Large ribosomal subunit protein bL33B.